The chain runs to 1083 residues: Solute carrier family 12 member 7 (1083 aa).

The interval 1–52 (MPTNFTVVPVEAHADGGGDETAERTEAPGTPEGPEPERPSPGDGNPRENSPF) is disordered. Residues 1–119 (MPTNFTVVPV…RREAKAPRMG (119 aa)) lie on the Cytoplasmic side of the membrane. Residues 12-26 (AHADGGGDETAERTE) show a composition bias toward basic and acidic residues. Residue Thr30 is modified to Phosphothreonine. 2 positions are modified to phosphoserine: Ser50 and Ser62. Residues 120–142 (TFIGVYLPCLQNILGVILFLRLT) traverse the membrane as a discontinuously helical segment. Asn131 and Ile132 together coordinate K(+). Residue Val135 participates in chloride binding. Over 143–149 (WIVGVAG) the chain is Extracellular. The helical transmembrane segment at 150-172 (VLESFLIVAMCCTCTMLTAISMS) threads the bilayer. At 173 to 196 (AIATNGVVPAGGSYYMISRSLGPE) the chain is on the cytoplasmic side. A helical transmembrane segment spans residues 197–225 (FGGAVGLCFYLGTTFAGAMYILGTIEIFL). Topologically, residues 226 to 249 (TYISPGAAIFQAEAAGGEAAAMLH) are extracellular. Helical transmembrane passes span 250-270 (NMRV…FVGV) and 272-300 (YVNK…KSAF). Over 301 to 419 (DPPDIPVCLL…PYVLTDIAAS (119 aa)) the chain is Extracellular. Cystine bridges form between Cys308–Cys323 and Cys343–Cys352. Residue Asn312 is glycosylated (N-linked (GlcNAc...) asparagine). The N-linked (GlcNAc...) asparagine glycan is linked to Asn360. Residues 420-440 (FTLLVGIYFPSVTGIMAGSNR) traverse the membrane as a helical segment. Residues Pro429 and Thr432 each coordinate K(+). A chloride-binding site is contributed by Pro429. Residues Gly433 and Ile434 each coordinate chloride. Residues 441 to 450 (SGDLKDAQKS) are Cytoplasmic-facing. The helical transmembrane segment at 451–473 (IPTGTILAIVTTSFIYLSCIVLF) threads the bilayer. Topologically, residues 474–504 (GACIEGVVLRDKFGEALQGNLVIGMLAWPSP) are extracellular. A helical membrane pass occupies residues 505-531 (WVIVIGSFFSTCGAGLQSLTGAPRLLQ). The Cytoplasmic segment spans residues 532 to 554 (AIARDGIVPFLQVFGHGKANGEP). Transmembrane regions (helical) follow at residues 555 to 571 (TWAL…GILI) and 574 to 598 (LDSV…ACAV). Tyr589 serves as a coordination point for chloride. The Cytoplasmic segment spans residues 599-612 (QTLLRTPNWRPRFK). The next 2 membrane-spanning stretches (helical) occupy residues 613-632 (FYHW…LMFI) and 636-651 (YYAL…IYKY). Residues 652 to 1083 (IEYRGAEKEW…GGREVITIYS (432 aa)) lie on the Cytoplasmic side of the membrane. Positions 664–680 (GIRGLSLNAARYALLRV) are scissor helix. Phosphothreonine is present on residues Thr973 and Thr980.

It belongs to the SLC12A transporter family. K/Cl co-transporter subfamily. Homodimer; adopts a domain-swap conformation at the scissor helices connecting the transmembrane domain and C-terminal domain. Heterodimer with K-Cl cotransporter SLC12A5. In terms of tissue distribution, detected in muscle, brain, lung, heart and kidney.

The protein resides in the cell membrane. It catalyses the reaction K(+)(in) + chloride(in) = K(+)(out) + chloride(out). Activated by N-ethylmaleimide (NEM). Inhibited by furosemide, DIDS and bumetanide. The inhibition is much stronger in the presence of 50 mM K(+) in the uptake medium. Inhibited by DIOA. Inhibited by WNK3. Mediates electroneutral potassium-chloride cotransport when activated by cell swelling. May mediate K(+) uptake into Deiters' cells in the cochlea and contribute to K(+) recycling in the inner ear. Important for the survival of cochlear outer and inner hair cells and the maintenance of the organ of Corti. May be required for basolateral Cl(-) extrusion in the kidney and contribute to renal acidification. This is Solute carrier family 12 member 7 from Homo sapiens (Human).